A 153-amino-acid chain; its full sequence is UPF0260 protein YcgN (153 aa).

The protein belongs to the UPF0260 family.

The sequence is that of UPF0260 protein YcgN from Escherichia coli O6:K15:H31 (strain 536 / UPEC).